The sequence spans 158 residues: Cyclic pyranopterin monophosphate synthase (158 aa).

Residues 74-76 (MCH) and 112-113 (ME) contribute to the substrate site. Aspartate 127 is an active-site residue.

The protein belongs to the MoaC family. As to quaternary structure, homohexamer; trimer of dimers.

It carries out the reaction (8S)-3',8-cyclo-7,8-dihydroguanosine 5'-triphosphate = cyclic pyranopterin phosphate + diphosphate. The protein operates within cofactor biosynthesis; molybdopterin biosynthesis. In terms of biological role, catalyzes the conversion of (8S)-3',8-cyclo-7,8-dihydroguanosine 5'-triphosphate to cyclic pyranopterin monophosphate (cPMP). In Helicobacter pylori (strain Shi470), this protein is Cyclic pyranopterin monophosphate synthase.